Consider the following 161-residue polypeptide: Cytochrome c-type biogenesis protein CcmE (161 aa).

At 1 to 8 the chain is on the cytoplasmic side; that stretch reads MNPRRKKR. Residues 9-29 form a helical; Signal-anchor for type II membrane protein membrane-spanning segment; the sequence is LTLAIALIGGVAAIASLLLYA. Over 30-161 the chain is Periplasmic; it reads LNSNLNLFYT…DYSQQKSAAQ (132 aa). Residues H131 and Y135 each contribute to the heme site. Residues 138 to 161 are disordered; sequence PEVAEAMGQKHEKLDYSQQKSAAQ.

This sequence belongs to the CcmE/CycJ family.

The protein resides in the cell inner membrane. In terms of biological role, heme chaperone required for the biogenesis of c-type cytochromes. Transiently binds heme delivered by CcmC and transfers the heme to apo-cytochromes in a process facilitated by CcmF and CcmH. This chain is Cytochrome c-type biogenesis protein CcmE, found in Shewanella sp. (strain MR-4).